The sequence spans 1371 residues: DNA-directed RNA polymerase subunit beta (1371 aa).

The protein belongs to the RNA polymerase beta chain family. As to quaternary structure, the RNAP catalytic core consists of 2 alpha, 1 beta, 1 beta' and 1 omega subunit. When a sigma factor is associated with the core the holoenzyme is formed, which can initiate transcription.

It catalyses the reaction RNA(n) + a ribonucleoside 5'-triphosphate = RNA(n+1) + diphosphate. Functionally, DNA-dependent RNA polymerase catalyzes the transcription of DNA into RNA using the four ribonucleoside triphosphates as substrates. This chain is DNA-directed RNA polymerase subunit beta, found in Geobacter sp. (strain M21).